The following is a 566-amino-acid chain: Putative sulfite reductase [NADPH] hemoprotein beta-component (566 aa).

[4Fe-4S] cluster-binding residues include cysteine 430, cysteine 436, cysteine 475, and cysteine 479. Cysteine 479 serves as a coordination point for siroheme.

This sequence belongs to the nitrite and sulfite reductase 4Fe-4S domain family. In terms of assembly, alpha(8)-beta(8). The alpha component is a flavoprotein, the beta component is a hemoprotein. Siroheme is required as a cofactor. Requires [4Fe-4S] cluster as cofactor.

The catalysed reaction is hydrogen sulfide + 3 NADP(+) + 3 H2O = sulfite + 3 NADPH + 4 H(+). It functions in the pathway sulfur metabolism; hydrogen sulfide biosynthesis; hydrogen sulfide from sulfite (NADPH route): step 1/1. Its function is as follows. Component of the sulfite reductase complex that catalyzes the 6-electron reduction of sulfite to sulfide. This is one of several activities required for the biosynthesis of L-cysteine from sulfate. The sequence is that of Putative sulfite reductase [NADPH] hemoprotein beta-component from Buchnera aphidicola subsp. Schizaphis graminum (strain Sg).